Reading from the N-terminus, the 516-residue chain is Glycosyl hydrolase family 109 protein 4 (516 aa).

An N-terminal signal peptide occupies residues 1 to 18 (MKKIKLLLVAGACVVLSA). Cys-19 carries N-palmitoyl cysteine lipidation. A lipid anchor (S-diacylglycerol cysteine) is attached at Cys-19. NAD(+) is bound by residues 76 to 77 (MR), Asp-98, 146 to 149 (WLHH), 166 to 167 (EV), and Asn-195. Residues Tyr-224, Arg-247, 259 to 262 (YATH), and Tyr-337 contribute to the substrate site. Residue Tyr-259 participates in NAD(+) binding.

Belongs to the Gfo/Idh/MocA family. Glycosyl hydrolase 109 subfamily. NAD(+) serves as cofactor.

It localises to the cell membrane. Glycosidase. In Phocaeicola vulgatus (strain ATCC 8482 / DSM 1447 / JCM 5826 / CCUG 4940 / NBRC 14291 / NCTC 11154) (Bacteroides vulgatus), this protein is Glycosyl hydrolase family 109 protein 4.